Here is a 182-residue protein sequence, read N- to C-terminus: ATP synthase subunit delta (182 aa).

This sequence belongs to the ATPase delta chain family. In terms of assembly, F-type ATPases have 2 components, F(1) - the catalytic core - and F(0) - the membrane proton channel. F(1) has five subunits: alpha(3), beta(3), gamma(1), delta(1), epsilon(1). F(0) has three main subunits: a(1), b(2) and c(10-14). The alpha and beta chains form an alternating ring which encloses part of the gamma chain. F(1) is attached to F(0) by a central stalk formed by the gamma and epsilon chains, while a peripheral stalk is formed by the delta and b chains.

It localises to the cell inner membrane. In terms of biological role, f(1)F(0) ATP synthase produces ATP from ADP in the presence of a proton or sodium gradient. F-type ATPases consist of two structural domains, F(1) containing the extramembraneous catalytic core and F(0) containing the membrane proton channel, linked together by a central stalk and a peripheral stalk. During catalysis, ATP synthesis in the catalytic domain of F(1) is coupled via a rotary mechanism of the central stalk subunits to proton translocation. Its function is as follows. This protein is part of the stalk that links CF(0) to CF(1). It either transmits conformational changes from CF(0) to CF(1) or is implicated in proton conduction. This is ATP synthase subunit delta from Cytophaga hutchinsonii (strain ATCC 33406 / DSM 1761 / CIP 103989 / NBRC 15051 / NCIMB 9469 / D465).